A 312-amino-acid polypeptide reads, in one-letter code: Beta-ketoacyl-[acyl-carrier-protein] synthase III (312 aa).

Active-site residues include Cys112 and His237. The interval 238–242 (QANIR) is ACP-binding. Residue Asn267 is part of the active site.

The protein belongs to the thiolase-like superfamily. FabH family. In terms of assembly, homodimer.

The protein resides in the cytoplasm. It carries out the reaction malonyl-[ACP] + acetyl-CoA + H(+) = 3-oxobutanoyl-[ACP] + CO2 + CoA. Its pathway is lipid metabolism; fatty acid biosynthesis. In terms of biological role, catalyzes the condensation reaction of fatty acid synthesis by the addition to an acyl acceptor of two carbons from malonyl-ACP. Catalyzes the first condensation reaction which initiates fatty acid synthesis and may therefore play a role in governing the total rate of fatty acid production. Possesses both acetoacetyl-ACP synthase and acetyl transacylase activities. Its substrate specificity determines the biosynthesis of branched-chain and/or straight-chain of fatty acids. The protein is Beta-ketoacyl-[acyl-carrier-protein] synthase III of Bacillus pumilus (strain SAFR-032).